Consider the following 155-residue polypeptide: Small ribosomal subunit protein uS7 (155 aa).

This sequence belongs to the universal ribosomal protein uS7 family. In terms of assembly, part of the 30S ribosomal subunit. Contacts proteins S9 and S11.

In terms of biological role, one of the primary rRNA binding proteins, it binds directly to 16S rRNA where it nucleates assembly of the head domain of the 30S subunit. Is located at the subunit interface close to the decoding center, probably blocks exit of the E-site tRNA. This chain is Small ribosomal subunit protein uS7, found in Xanthomonas campestris pv. campestris (strain 8004).